Here is a 124-residue protein sequence, read N- to C-terminus: Probable S-adenosyl-L-methionine-binding protein VNG_1115H (124 aa).

Residues 3-124 (ATPIGYADTR…PVLDLKPALD (122 aa)) enclose the TsaA-like domain. S-adenosyl-L-methionine is bound by residues 20–22 (PRQ), 58–59 (DD), Arg-78, and 111–114 (AHGS).

Belongs to the tRNA methyltransferase O family.

This Halobacterium salinarum (strain ATCC 700922 / JCM 11081 / NRC-1) (Halobacterium halobium) protein is Probable S-adenosyl-L-methionine-binding protein VNG_1115H.